The following is a 1224-amino-acid chain: Tyrosine-protein kinase abl-1 (1224 aa).

Residues 115 to 188 (SSAPLFVALY…PSNFIAPYNS (74 aa)) enclose the SH3 domain. Positions 194 to 284 (WYHGKISRSD…GLICLLMYPA (91 aa)) constitute an SH2 domain. The Protein kinase domain occupies 311-562 (IIMHNKLGGG…PRFRDIHFNL (252 aa)). ATP contacts are provided by residues 317 to 325 (LGGGQYGDV), Lys-340, and 385 to 391 (EFMCNGN). Asp-432 serves as the catalytic Proton acceptor. The Kinase activation loop motif lies at 450 to 474 (DFGLARFMKEDTYTAHAGAKFPIKW). Residues 579-620 (LKKNNDKKLESDKRRSNVRERSDSKSRHSSHHDRDRDRESLH) show a composition bias toward basic and acidic residues. Disordered stretches follow at residues 579–671 (LKKN…NTKP), 736–775 (KESTDADNEGAGSSSLSRTVSNDSLDTLPLPDSMNSSTYV), 796–881 (KRSE…DVGM), 914–937 (LRHVPKEESNTSSQEDLPLDATDN), and 968–1016 (RPFS…RSNG). 2 stretches are compositionally biased toward polar residues: residues 639 to 655 (SVSFFNPSTTSKVTSFR) and 746 to 760 (AGSSSLSRTVSNDSL). 2 stretches are compositionally biased toward basic and acidic residues: residues 797 to 819 (RSETPELDHIDSDTADETTKSEK) and 864 to 877 (PDSKAEDSSDETTK). Residues 973-984 (QCPNNSTSSAIS) show a composition bias toward polar residues. Over residues 1001–1016 (YEERMKPELPRKRSNG) the composition is skewed to basic and acidic residues.

The protein belongs to the protein kinase superfamily. Tyr protein kinase family. ABL subfamily. As to quaternary structure, interacts (via SH2 and SH3 domains) with mig-13; the interaction is direct. May interact with soem-1.

Its subcellular location is the cell membrane. The protein resides in the cytoplasm. It carries out the reaction L-tyrosyl-[protein] + ATP = O-phospho-L-tyrosyl-[protein] + ADP + H(+). Its function is as follows. Functions downstream of migratory protein mig-13 and is involved in Q neuroblast migration during larval development. Recruited by mig-13 to the leading edge of Q neuroblasts and their descendents to signal downstream, likely to the wve-1 pathway, and direct migration along the anteroposterior body axis. Promotes germline cell apoptosis in response to oxidative, osmotic and heat shock stresses. This is Tyrosine-protein kinase abl-1 (abl-1) from Caenorhabditis elegans.